A 426-amino-acid chain; its full sequence is Serine--tRNA ligase (426 aa).

Basic and acidic residues predominate over residues Met1–Arg15. Residues Met1–Ala20 form a disordered region. Thr228–Glu230 serves as a coordination point for L-serine. ATP contacts are provided by residues Arg259–Glu261 and Val275. L-serine is bound at residue Glu282. Residue Glu346–Ser349 coordinates ATP. Thr386 is an L-serine binding site.

The protein belongs to the class-II aminoacyl-tRNA synthetase family. Type-1 seryl-tRNA synthetase subfamily. As to quaternary structure, homodimer. The tRNA molecule binds across the dimer.

It localises to the cytoplasm. It carries out the reaction tRNA(Ser) + L-serine + ATP = L-seryl-tRNA(Ser) + AMP + diphosphate + H(+). The enzyme catalyses tRNA(Sec) + L-serine + ATP = L-seryl-tRNA(Sec) + AMP + diphosphate + H(+). It functions in the pathway aminoacyl-tRNA biosynthesis; selenocysteinyl-tRNA(Sec) biosynthesis; L-seryl-tRNA(Sec) from L-serine and tRNA(Sec): step 1/1. Catalyzes the attachment of serine to tRNA(Ser). Is also able to aminoacylate tRNA(Sec) with serine, to form the misacylated tRNA L-seryl-tRNA(Sec), which will be further converted into selenocysteinyl-tRNA(Sec). The protein is Serine--tRNA ligase of Paenarthrobacter aurescens (strain TC1).